The chain runs to 280 residues: Beta carbonic anhydrase 4 (280 aa).

A2 bears the N-acetylalanine mark. A coiled-coil region spans residues 47-76 (NVAAAKIKALTAELKELDSSNSDAIERIKT). The residue at position 57 (T57) is a Phosphothreonine. S117 is modified (phosphoserine). An S-nitrosocysteine modification is found at C223.

The protein belongs to the beta-class carbonic anhydrase family. Interacts with DTX56. As to expression, strongly expressed in aerial tissues including leaves, stems, flowers and siliques. Accumulates in both guard cells and mesophyll cells.

Its subcellular location is the cell membrane. The enzyme catalyses hydrogencarbonate + H(+) = CO2 + H2O. Reversible hydration of carbon dioxide. Together with BCA1, involved in the CO(2) signaling pathway which controls gas-exchange between plants and the atmosphere by modulating stomatal development and movements. Promotes water use efficiency. This is Beta carbonic anhydrase 4 from Arabidopsis thaliana (Mouse-ear cress).